Reading from the N-terminus, the 282-residue chain is Protoheme IX farnesyltransferase (282 aa).

Helical transmembrane passes span 9–29, 39–59, 79–99, 102–122, 139–159, 165–185, 210–230, 231–251, and 261–281; these read LAKPGIIFGNLITLTGGFLLA, LPLFVYVMIGVALMIAAGCVF, LVTGDISVIQATIYGTILLIL, LVLYYLVNLLTLWIIIIGFIV, VLGGISGAIPPVAGYTAVVNI, LALFLILFFWQIPHSYAIAML, IMLFYLALFVVSCALPAVLGS, ADLFSFIVCMLVALFWMYKSI, and VFAKTVFKFSIIVITAICLTM.

It belongs to the UbiA prenyltransferase family. Protoheme IX farnesyltransferase subfamily.

It localises to the cell inner membrane. The enzyme catalyses heme b + (2E,6E)-farnesyl diphosphate + H2O = Fe(II)-heme o + diphosphate. It participates in porphyrin-containing compound metabolism; heme O biosynthesis; heme O from protoheme: step 1/1. Converts heme B (protoheme IX) to heme O by substitution of the vinyl group on carbon 2 of heme B porphyrin ring with a hydroxyethyl farnesyl side group. This Francisella tularensis subsp. holarctica (strain FTNF002-00 / FTA) protein is Protoheme IX farnesyltransferase.